We begin with the raw amino-acid sequence, 378 residues long: MTMVGSRTSPIFNALRVELNAREAELVEIPLIQPADPFLDMAGEDLRRRIFLTENENGDSLCLRPEFTIPVCRNHIALNAATPKRYAYLGEVFRQRRDGAAEFLQAGIEDLGAADEAASDARSLADALSCVKAIAPDAPLEIVLGDQSVFAGMLKALGLPQGWRKKLLRSFGDAHSMDLALAELTGTQRRDPLPESLAVLVAEGDEIGLARMLEAEMLEAGISPGAGRTPVEIARRLIEKEDLAATHFPAAALDLLRQFLAIRVSLDMAAVTLRAFAADNALDLGAVLQKFEARADAIAQAGIEMKDIIYDASFGRPLDYYTGLVYEIRDASNRQDGVLAGGGRYDRLLTMLGACEAIPGVGFSIWLDRLQALAGEKQ.

It belongs to the class-II aminoacyl-tRNA synthetase family. HisZ subfamily. Heteromultimer composed of HisG and HisZ subunits.

It localises to the cytoplasm. It participates in amino-acid biosynthesis; L-histidine biosynthesis; L-histidine from 5-phospho-alpha-D-ribose 1-diphosphate: step 1/9. Required for the first step of histidine biosynthesis. May allow the feedback regulation of ATP phosphoribosyltransferase activity by histidine. This chain is ATP phosphoribosyltransferase regulatory subunit, found in Brucella abortus (strain 2308).